The following is a 109-amino-acid chain: Small ribosomal subunit protein bS6 (109 aa).

Belongs to the bacterial ribosomal protein bS6 family.

In terms of biological role, binds together with bS18 to 16S ribosomal RNA. This Ehrlichia ruminantium (strain Gardel) protein is Small ribosomal subunit protein bS6.